An 88-amino-acid polypeptide reads, in one-letter code: UPF0223 protein BH2638 (88 aa).

The protein belongs to the UPF0223 family.

This chain is UPF0223 protein BH2638, found in Halalkalibacterium halodurans (strain ATCC BAA-125 / DSM 18197 / FERM 7344 / JCM 9153 / C-125) (Bacillus halodurans).